We begin with the raw amino-acid sequence, 154 residues long: Transcriptional repressor NrdR (154 aa).

Residues 3 to 34 fold into a zinc finger; sequence CPFCGANDTKVIDSRLVAEGEQVRRRRECVAC. One can recognise an ATP-cone domain in the interval 49-139; sequence PRLIKQDGTR…VYRRFQDLDE (91 aa).

Belongs to the NrdR family. Zn(2+) is required as a cofactor.

Its function is as follows. Negatively regulates transcription of bacterial ribonucleotide reductase nrd genes and operons by binding to NrdR-boxes. The polypeptide is Transcriptional repressor NrdR (Pseudomonas putida (strain W619)).